Reading from the N-terminus, the 125-residue chain is MNKTLILALSALLGLAACSAERVSLFPSYKLKIIQGNELEPRAVAALRPGMTKDQVLLLLGSPILRDAFHTDRWDYTFNTSRNGIIKERSNLTVYFENGVLVRTEGDVLQNAAEALKDRQNTDKP.

A signal peptide spans Met1–Ala17. Cys18 is lipidated: N-palmitoyl cysteine. A lipid anchor (S-diacylglycerol cysteine) is attached at Cys18.

Belongs to the BamE family. As to quaternary structure, part of the Bam complex.

Its subcellular location is the cell outer membrane. Part of the outer membrane protein assembly complex, which is involved in assembly and insertion of beta-barrel proteins into the outer membrane. The protein is Outer membrane protein assembly factor BamE of Neisseria meningitidis serogroup B (strain ATCC BAA-335 / MC58).